Here is a 63-residue protein sequence, read N- to C-terminus: MAQTCDLCGRGPAFGNRISHAHNVTKRRWNINLQSVRALVNGAGRRMRVCTSCIRNNKVQKVA.

Belongs to the bacterial ribosomal protein bL28 family.

The protein is Large ribosomal subunit protein bL28 of Solibacter usitatus (strain Ellin6076).